Consider the following 311-residue polypeptide: Malate dehydrogenase (311 aa).

10–15 (GAGHTG) is an NAD(+) binding site. Substrate contacts are provided by Arg-85 and Arg-91. Residues Asn-98 and 121-123 (LTN) contribute to the NAD(+) site. 2 residues coordinate substrate: Asn-123 and Arg-154. His-178 (proton acceptor) is an active-site residue.

Belongs to the LDH/MDH superfamily. MDH type 3 family.

The enzyme catalyses (S)-malate + NAD(+) = oxaloacetate + NADH + H(+). In terms of biological role, catalyzes the reversible oxidation of malate to oxaloacetate. In Staphylococcus carnosus (strain TM300), this protein is Malate dehydrogenase.